The sequence spans 164 residues: General odorant-binding protein 1 (164 aa).

The signal sequence occupies residues 1–19 (MPGVLRALLLLAAAAPLLA). 3 disulfide bridges follow: C38-C73, C69-C127, and C116-C136.

It belongs to the PBP/GOBP family. In terms of tissue distribution, antenna.

In terms of biological role, present in the aqueous fluid surrounding olfactory sensory dendrites and are thought to aid in the capture and transport of hydrophobic odorants into and through this fluid. The chain is General odorant-binding protein 1 from Heliothis virescens (Tobacco budworm moth).